Consider the following 74-residue polypeptide: Omega-conotoxin-like protein 1 (74 aa).

The signal sequence occupies residues 1-20; that stretch reads MSKFILLVCILLLTTNIVSA. Cystine bridges form between Cys-24–Cys-38, Cys-31–Cys-43, and Cys-37–Cys-50.

As to expression, highly expressed in brain. Is also found in hemolymph.

The impact of this protein on the neuronal activity of the honeybee brain is not known. It does not affect apparent movement or hatching of blowfly larvae. However, when injected into fish, it induces a strong reversible paralytic effect. In addition, the presence of this small peptide in the hemolymph of adult drones together with its induction after bacterial infection suggests that this peptide exhibits antibacterial activity. This peptide may act by inhibiting ion channels. The polypeptide is Omega-conotoxin-like protein 1 (Apis mellifera (Honeybee)).